A 157-amino-acid chain; its full sequence is UPF0178 protein Nwi_2152 (157 aa).

It belongs to the UPF0178 family.

This Nitrobacter winogradskyi (strain ATCC 25391 / DSM 10237 / CIP 104748 / NCIMB 11846 / Nb-255) protein is UPF0178 protein Nwi_2152.